We begin with the raw amino-acid sequence, 257 residues long: tRNA pseudouridine synthase A (257 aa).

Asp-53 (nucleophile) is an active-site residue. A substrate-binding site is contributed by Tyr-111.

The protein belongs to the tRNA pseudouridine synthase TruA family. Homodimer.

It carries out the reaction uridine(38/39/40) in tRNA = pseudouridine(38/39/40) in tRNA. Formation of pseudouridine at positions 38, 39 and 40 in the anticodon stem and loop of transfer RNAs. This chain is tRNA pseudouridine synthase A, found in Xanthomonas axonopodis pv. citri (strain 306).